The primary structure comprises 400 residues: Elongation factor Tu 2 (400 aa).

In terms of domain architecture, tr-type G spans 10–209 (KPHVNIGTIG…KVDEYIPTPQ (200 aa)). The segment at 19-26 (GHVDHGKT) is G1. 19–26 (GHVDHGKT) is a binding site for GTP. Position 26 (T26) interacts with Mg(2+). The interval 60–64 (GITIN) is G2. Positions 81–84 (DCPG) are G3. Residues 81–85 (DCPGH) and 136–139 (NKAD) contribute to the GTP site. The interval 136-139 (NKAD) is G4. Residues 174–176 (SAL) are G5.

It belongs to the TRAFAC class translation factor GTPase superfamily. Classic translation factor GTPase family. EF-Tu/EF-1A subfamily. As to quaternary structure, monomer.

It localises to the cytoplasm. It carries out the reaction GTP + H2O = GDP + phosphate + H(+). GTP hydrolase that promotes the GTP-dependent binding of aminoacyl-tRNA to the A-site of ribosomes during protein biosynthesis. This Carboxydothermus hydrogenoformans (strain ATCC BAA-161 / DSM 6008 / Z-2901) protein is Elongation factor Tu 2.